The sequence spans 101 residues: CRISPR-associated endoribonuclease Cas2 (101 aa).

Residue aspartate 8 coordinates Mg(2+).

Belongs to the CRISPR-associated endoribonuclease Cas2 protein family. Homodimer, forms a heterotetramer with a Cas1 homodimer. Requires Mg(2+) as cofactor.

Functionally, CRISPR (clustered regularly interspaced short palindromic repeat), is an adaptive immune system that provides protection against mobile genetic elements (viruses, transposable elements and conjugative plasmids). CRISPR clusters contain sequences complementary to antecedent mobile elements and target invading nucleic acids. CRISPR clusters are transcribed and processed into CRISPR RNA (crRNA). Functions as a ssRNA-specific endoribonuclease. Involved in the integration of spacer DNA into the CRISPR cassette. In Ligilactobacillus salivarius (strain UCC118) (Lactobacillus salivarius), this protein is CRISPR-associated endoribonuclease Cas2.